Consider the following 194-residue polypeptide: Large ribosomal subunit protein bL25 (194 aa).

The protein belongs to the bacterial ribosomal protein bL25 family. CTC subfamily. As to quaternary structure, part of the 50S ribosomal subunit; part of the 5S rRNA/L5/L18/L25 subcomplex. Contacts the 5S rRNA. Binds to the 5S rRNA independently of L5 and L18.

In terms of biological role, this is one of the proteins that binds to the 5S RNA in the ribosome where it forms part of the central protuberance. This Geobacter sulfurreducens (strain ATCC 51573 / DSM 12127 / PCA) protein is Large ribosomal subunit protein bL25.